Here is a 298-residue protein sequence, read N- to C-terminus: N-acetylmuramic acid 6-phosphate etherase (298 aa).

In terms of domain architecture, SIS spans 55 to 218; the sequence is IHAQVSGGGR…STGLMIKSGK (164 aa). Residue glutamate 83 is the Proton donor of the active site. The active site involves glutamate 114.

This sequence belongs to the GCKR-like family. MurNAc-6-P etherase subfamily. Homodimer.

The catalysed reaction is N-acetyl-D-muramate 6-phosphate + H2O = N-acetyl-D-glucosamine 6-phosphate + (R)-lactate. The protein operates within amino-sugar metabolism; 1,6-anhydro-N-acetylmuramate degradation. It functions in the pathway amino-sugar metabolism; N-acetylmuramate degradation. Its pathway is cell wall biogenesis; peptidoglycan recycling. Specifically catalyzes the cleavage of the D-lactyl ether substituent of MurNAc 6-phosphate, producing GlcNAc 6-phosphate and D-lactate. Together with AnmK, is also required for the utilization of anhydro-N-acetylmuramic acid (anhMurNAc) either imported from the medium or derived from its own cell wall murein, and thus plays a role in cell wall recycling. The protein is N-acetylmuramic acid 6-phosphate etherase of Shigella flexneri serotype 5b (strain 8401).